Reading from the N-terminus, the 89-residue chain is Small ribosomal subunit protein uS15 (89 aa).

This sequence belongs to the universal ribosomal protein uS15 family. In terms of assembly, part of the 30S ribosomal subunit. Forms a bridge to the 50S subunit in the 70S ribosome, contacting the 23S rRNA.

Its function is as follows. One of the primary rRNA binding proteins, it binds directly to 16S rRNA where it helps nucleate assembly of the platform of the 30S subunit by binding and bridging several RNA helices of the 16S rRNA. Functionally, forms an intersubunit bridge (bridge B4) with the 23S rRNA of the 50S subunit in the ribosome. The polypeptide is Small ribosomal subunit protein uS15 (Ruegeria sp. (strain TM1040) (Silicibacter sp.)).